Consider the following 436-residue polypeptide: GTPase Der (436 aa).

EngA-type G domains are found at residues 4–167 (PVVA…PKGG) and 176–351 (IKFC…DNHA). Residues 10–17 (GRPNVGKS), 57–61 (DTGGI), 119–122 (NKID), 182–189 (GRPNVGKS), 229–233 (DTAGM), and 294–297 (NKWD) contribute to the GTP site. In terms of domain architecture, KH-like spans 352-436 (MRVQTNVLNE…PIKIIARPRK (85 aa)).

This sequence belongs to the TRAFAC class TrmE-Era-EngA-EngB-Septin-like GTPase superfamily. EngA (Der) GTPase family. In terms of assembly, associates with the 50S ribosomal subunit.

Its function is as follows. GTPase that plays an essential role in the late steps of ribosome biogenesis. This is GTPase Der from Geobacillus kaustophilus (strain HTA426).